Here is a 27-residue protein sequence, read N- to C-terminus: U18-ctenitoxin-Co1a (27 aa).

This sequence belongs to the u18-CNTX family. In terms of tissue distribution, expressed by the venom gland.

It localises to the secreted. Not toxic to mice by intracerebroventricular injection. This Ctenus ornatus (Brazilian spider) protein is U18-ctenitoxin-Co1a.